The chain runs to 295 residues: DegV domain-containing protein MG326 (295 aa).

Residues 4–292 (TAIITDSTAS…IDAFSISLLI (289 aa)) enclose the DegV domain. Residues threonine 63 and serine 95 each contribute to the hexadecanoate site.

In terms of biological role, may bind long-chain fatty acids, such as palmitate, and may play a role in lipid transport or fatty acid metabolism. The polypeptide is DegV domain-containing protein MG326 (Mycoplasma genitalium (strain ATCC 33530 / DSM 19775 / NCTC 10195 / G37) (Mycoplasmoides genitalium)).